The chain runs to 429 residues: Cholesterol 7-desaturase nvd (429 aa).

A helical membrane pass occupies residues 23 to 43; it reads FVICLWTLAVTFIRIYWIFFV. A Rieske domain is found at 98–201; the sequence is YGILKSSQLK…SQEVDGFIFI (104 aa). Cysteine 138, histidine 140, cysteine 158, and histidine 161 together coordinate [2Fe-2S] cluster.

Belongs to the cholesterol 7-desaturase family. [2Fe-2S] cluster is required as a cofactor. As to expression, expressed predominantly in the prothoracic gland and weakly in brain and malpighian tubules.

The protein resides in the membrane. The enzyme catalyses cholesterol + NADPH + O2 + H(+) = 7-dehydrocholesterol + NADP(+) + 2 H2O. The catalysed reaction is cholesterol + NADH + O2 + H(+) = 7-dehydrocholesterol + NAD(+) + 2 H2O. It participates in steroid hormone biosynthesis; dafachronic acid biosynthesis. In terms of biological role, catalyzes the production of 7-dehydrocholesterol (7-DHC or cholesta-5,7-dien-3beta-ol) by inserting a double bond (desaturating) at the C7-C8 single bond of cholesterol. Essential regulator of steroid biosynthesis, as this reaction is the first step in the synthesis of the steroid hormone Delta(7)-dafachronic acid. Required for insect molting, metamorphosis and body growth throughout development via the regulation of ecdysteroid biosynthesis in the prothoracic gland. The sequence is that of Cholesterol 7-desaturase nvd from Drosophila melanogaster (Fruit fly).